Here is a 268-residue protein sequence, read N- to C-terminus: Putative esterase/lipase 2 (268 aa).

The active site involves His-28. His-96 (charge relay system) is an active-site residue.

The protein belongs to the lipase/esterase LIP3/BchO family.

The chain is Putative esterase/lipase 2 from Mycoplasma pneumoniae (strain ATCC 29342 / M129 / Subtype 1) (Mycoplasmoides pneumoniae).